The chain runs to 1024 residues: NLR family CARD domain-containing protein 4 (1024 aa).

Positions 1-88 constitute a CARD domain; that stretch reads MNFIKDNSRA…PLFQDLNGQS (88 aa). Residues 95–298 form a nucleotide-binding domain (NBD) region; it reads EGDLDDLAQD…QFGALTAEVG (204 aa). Residues 163–476 form the NACHT domain; it reads SPCIIEGESG…VTKGNGYLQK (314 aa). 169-176 is a binding site for ATP; that stretch reads GESGKGKS. The segment at 356 to 463 is winged-helix domain (WHD); that stretch reads SHTQTTLFHT…RLSSLLTSHE (108 aa). Ser-533 bears the Phosphoserine mark. 12 LRR repeats span residues 578-598, 656-679, 735-758, 762-785, 787-812, 824-847, 848-870, 878-902, 911-933, 936-963, 965-985, and 999-1021; these read FFQGKSLYINSGNIPDYLFDF, KQEFRTLEVTLRDFSKLNKQDIRY, VTNLKTLSIHDLQNQRLPGGLTDS, LKNLTKLIMDNIKMNEEDAIKLAE, LKNLKKMCLFHLTHLSDIGEGMDYIV, EIQLVSCCLSANAVKILAQNLHNL, VKLSILDLSENYLEKDGNEALHE, LEQLTALMLPWGCDVQGSLSSLLKH, KLGLKNWRLTDTEIRILGAFFGK, LKNFQQLNLAGNRVSSDGWLAFMGVFEN, KQLVFFDFSTKEFLPDPALVR, and EARLVGWQFDDDDLSVITGAFKL.

Homooligomer; homooligomerizes to induce formation of the NLRC4 inflammasome. Homooligomerizes following activation by pathogenic proteins. Component of the NLRC4 inflammasome, at least composed of NLRC4 and caspase-1 (CASP1). Some NLRC4 inflammasomes contain PYCARD/ASC, while some others directly contact and activate CASP1. Interacts (via CARD domain) with PYCARD/ASC, pro-caspase-1 (CASP1), NOD2, BCL10 and NALP1 (NAC) by CARD-CARD interaction. Interacts with EIF2AK2/PKR. In terms of processing, phosphorylated at Ser-533 following infection of macrophages with S.typhimurium (Salmonella). Phosphorylation is essential for NLRC4 inflammasome function to promote caspase-1 activation and pyroptosis. PRKCD phosphorylates Ser-533 in vitro. Isoform 2 is expressed ubiquitously, although highly expressed in lung and spleen. Isoform 1 is highly expressed in lung, followed by leukocytes especially monocytes, lymph node, colon, brain, prostate, placenta, spleen, bone marrow and fetal liver. Isoform 4 is only detected in brain.

It localises to the cytoplasm. The protein resides in the cytosol. Its subcellular location is the inflammasome. Key component of inflammasomes that indirectly senses specific proteins from pathogenic bacteria and fungi and responds by assembling an inflammasome complex that promotes caspase-1 activation, cytokine production and macrophage pyroptosis. The NLRC4 inflammasome is activated as part of the innate immune response to a range of intracellular bacteria. This is NLR family CARD domain-containing protein 4 (NLRC4) from Homo sapiens (Human).